A 623-amino-acid polypeptide reads, in one-letter code: Bifunctional enzyme CysN/CysC (623 aa).

The tract at residues Met-1–Gln-450 is sulfate adenylyltransferase. The tr-type G domain occupies Lys-14–Val-228. Residues Gly-23–Ser-30 form a G1 region. Residue Gly-23 to Ser-30 coordinates GTP. The segment at Gly-81–Asp-85 is G2. A G3 region spans residues Asp-102 to Gly-105. GTP is bound by residues Asp-102–His-106 and Asn-157–Asp-160. A G4 region spans residues Asn-157–Asp-160. The segment at Ser-194–Leu-196 is G5. The segment at Thr-451–Lys-623 is adenylyl-sulfate kinase. Gly-459–Ser-466 is an ATP binding site. Ser-533 acts as the Phosphoserine intermediate in catalysis.

This sequence in the C-terminal section; belongs to the APS kinase family. It in the N-terminal section; belongs to the TRAFAC class translation factor GTPase superfamily. Classic translation factor GTPase family. CysN/NodQ subfamily. As to quaternary structure, heterodimer composed of CysD, the smaller subunit, and CysNC.

The enzyme catalyses sulfate + ATP + H(+) = adenosine 5'-phosphosulfate + diphosphate. It carries out the reaction adenosine 5'-phosphosulfate + ATP = 3'-phosphoadenylyl sulfate + ADP + H(+). It participates in sulfur metabolism; hydrogen sulfide biosynthesis; sulfite from sulfate: step 1/3. Its pathway is sulfur metabolism; hydrogen sulfide biosynthesis; sulfite from sulfate: step 2/3. With CysD forms the ATP sulfurylase (ATPS) that catalyzes the adenylation of sulfate producing adenosine 5'-phosphosulfate (APS) and diphosphate, the first enzymatic step in sulfur assimilation pathway. APS synthesis involves the formation of a high-energy phosphoric-sulfuric acid anhydride bond driven by GTP hydrolysis by CysN coupled to ATP hydrolysis by CysD. Its function is as follows. APS kinase catalyzes the synthesis of activated sulfate. This chain is Bifunctional enzyme CysN/CysC (cysNC), found in Xylella fastidiosa (strain Temecula1 / ATCC 700964).